Reading from the N-terminus, the 32-residue chain is Hemocyanin C chain (32 aa).

It belongs to the tyrosinase family. Hemocyanin subfamily. As to expression, hemolymph.

Its subcellular location is the secreted. The protein resides in the extracellular space. Its function is as follows. Hemocyanins are copper-containing oxygen carriers occurring freely dissolved in the hemolymph of many mollusks and arthropods. In Cherax destructor (Common yabby crayfish), this protein is Hemocyanin C chain.